Reading from the N-terminus, the 377-residue chain is uncharacterized protein (377 aa).

This is an uncharacterized protein from Caenorhabditis elegans.